Consider the following 76-residue polypeptide: Exodeoxyribonuclease 7 small subunit (76 aa).

The protein belongs to the XseB family. As to quaternary structure, heterooligomer composed of large and small subunits.

It is found in the cytoplasm. It catalyses the reaction Exonucleolytic cleavage in either 5'- to 3'- or 3'- to 5'-direction to yield nucleoside 5'-phosphates.. Its function is as follows. Bidirectionally degrades single-stranded DNA into large acid-insoluble oligonucleotides, which are then degraded further into small acid-soluble oligonucleotides. In Staphylococcus haemolyticus (strain JCSC1435), this protein is Exodeoxyribonuclease 7 small subunit.